The following is a 335-amino-acid chain: MGASSSSALARLGLPAQARPRWLGVAVLGLAAVALGAVAWRRAWPRRRRRLQQVGTVAKLWIYPVKSCKGVPVSEAECTAMGLRSGNLRDRFLLVIKEDGHIVTARQEPRLVLVSITYENNCLIFKAPDMDQLVLPSKQPSSNKLHNCRIFGLDIKGRDCGNEAAQWFTNFLKTEVYRLVQFETNMKGRTSRKLLPTLDQNYQVAYPDCSPLLIMTDASLVDLNTRIEKKMKMENFRPNIVVTGCDAFEEDTWDELLIGSVEVKKIMACPRCILTTVDPDTGVIDRKEPLDTLKSYRLCDPSERELYKLSPLFGIYYSVEKIGSLRVGDPVYRMV.

The N-terminal 35 residues, 1-35 (MGASSSSALARLGLPAQARPRWLGVAVLGLAAVAL), are a transit peptide targeting the mitochondrion. Glycyl lysine isopeptide (Lys-Gly) (interchain with G-Cter in ubiquitin) cross-links involve residues Lys-59, Lys-138, and Lys-144. The residue at position 156 (Lys-156) is an N6-acetyllysine; alternate. Lys-156 participates in a covalent cross-link: Glycyl lysine isopeptide (Lys-Gly) (interchain with G-Cter in ubiquitin); alternate. Residues Lys-173, Lys-187, Lys-287, and Lys-294 each participate in a glycyl lysine isopeptide (Lys-Gly) (interchain with G-Cter in ubiquitin) cross-link. Residues 188–334 (GRTSRKLLPT…LRVGDPVYRM (147 aa)) enclose the MOSC domain.

In terms of assembly, component of a complex composed of cytochrome b5, NADH-cytochrome b5 reductase (CYB5R3) and MTARC2. Mo-molybdopterin serves as cofactor. Post-translationally, ubiquitinated by PRKN during mitophagy, leading to its degradation and enhancement of mitophagy. Deubiquitinated by USP30.

Its subcellular location is the mitochondrion outer membrane. The protein localises to the peroxisome. The catalysed reaction is N(omega)-hydroxy-L-arginine + 2 Fe(II)-[cytochrome b5] + 2 H(+) = L-arginine + 2 Fe(III)-[cytochrome b5] + H2O. Its function is as follows. Catalyzes the reduction of N-oxygenated molecules, acting as a counterpart of cytochrome P450 and flavin-containing monooxygenases in metabolic cycles. As a component of prodrug-converting system, reduces a multitude of N-hydroxylated prodrugs particularly amidoximes, leading to increased drug bioavailability. May be involved in mitochondrial N(omega)-hydroxy-L-arginine (NOHA) reduction, regulating endogenous nitric oxide levels and biosynthesis. Postulated to cleave the N-OH bond of N-hydroxylated substrates in concert with electron transfer from NADH to cytochrome b5 reductase then to cytochrome b5, the ultimate electron donor that primes the active site for substrate reduction. The sequence is that of Mitochondrial amidoxime reducing component 2 (MTARC2) from Macaca fascicularis (Crab-eating macaque).